Reading from the N-terminus, the 454-residue chain is uncharacterized protein (454 aa).

The protein belongs to the outer membrane factor (OMF) (TC 1.B.17) family.

This is an uncharacterized protein from Haemophilus influenzae (strain ATCC 51907 / DSM 11121 / KW20 / Rd).